The primary structure comprises 655 residues: p-hydroxybenzoic acid efflux pump subunit AaeB (655 aa).

11 helical membrane-spanning segments follow: residues 13–33, 38–58, 69–89, 93–113, 121–141, 152–172, 370–390, 407–427, 431–451, 459–479, and 482–502; these read FAVKLATAIVLALFVGFHFQL, WAVLTAAIVAAGPAFAAGGEP, LRIIGTFIGCIAGLVIIIAMI, LLMILVCCIWAGFCTWISSLV, WGLAGYTALIIVITIQPEPLL, EIVIGIVCAIMADLLFSPRSI, LFWLWTGWTSGSGAMVMIAVV, FIYGTLAALPLGLLYFLVIIP, QSMLLLCISLAVLGFFLGIEV, MGALASTINIIVLDNPMTFHF, and FLDSALGQIVGCVLAFTVILL.

Belongs to the aromatic acid exporter ArAE (TC 2.A.85) family.

The protein localises to the cell inner membrane. Forms an efflux pump with AaeA. Could function as a metabolic relief valve, allowing to eliminate certain compounds when they accumulate to high levels in the cell. The sequence is that of p-hydroxybenzoic acid efflux pump subunit AaeB from Escherichia coli (strain SMS-3-5 / SECEC).